The primary structure comprises 238 residues: MGSKTLPAPVPLHPAPQLNYSLLRTLNAFPVAVDQLYGLSALHTVQMNRWTVGFPQLQGLADPRFPGALPFPAAAAHLLPHKHPVHRKDRPRFDFANLAVAATQEDPPVTGQSRLSPERRPARGRLPAKSKKEFICRFCGRHFTKSYNLLIHERTHTDERPYTCDICHKAFRRQDHLRDHRYIHSKEKPFKCQECGKGFCQSRTLAVHKTLHLQTSSLSAAAAAGRCFGATATCGATV.

The tract at residues Glu105–Leu126 is disordered. 3 C2H2-type zinc fingers span residues Phe134 to His156, Tyr162 to His184, and Phe190 to His212.

This sequence belongs to the Odd C2H2-type zinc-finger protein family. At the 8-somite stage, expressed in the pronephros, with weak generalized expression elsewhere. At 24 hpf, expressed in the kidney tubules and the anterior duct, and also in the gut. At 60 hpf, expressed in the tubules and the pectoral fin buds.

It is found in the nucleus. Functionally, transcriptional repressor. Required for pronephric kidney development. This chain is Protein odd-skipped-related 2, found in Danio rerio (Zebrafish).